We begin with the raw amino-acid sequence, 89 residues long: Small ribosomal subunit protein bS20 (89 aa).

Positions 1-22 are disordered; that stretch reads MANTASARKRIRQNERRRERNV. Positions 12-22 are enriched in basic and acidic residues; it reads RQNERRRERNV.

The protein belongs to the bacterial ribosomal protein bS20 family.

Functionally, binds directly to 16S ribosomal RNA. This is Small ribosomal subunit protein bS20 from Gluconobacter oxydans (strain 621H) (Gluconobacter suboxydans).